Here is a 108-residue protein sequence, read N- to C-terminus: Phosphoribosyl-AMP cyclohydrolase (108 aa).

Residue Asp-72 participates in Mg(2+) binding. Residue Cys-73 coordinates Zn(2+). Asp-74 and Asp-76 together coordinate Mg(2+). Cys-89 and Cys-96 together coordinate Zn(2+).

The protein belongs to the PRA-CH family. Homodimer. It depends on Mg(2+) as a cofactor. The cofactor is Zn(2+).

Its subcellular location is the cytoplasm. It carries out the reaction 1-(5-phospho-beta-D-ribosyl)-5'-AMP + H2O = 1-(5-phospho-beta-D-ribosyl)-5-[(5-phospho-beta-D-ribosylamino)methylideneamino]imidazole-4-carboxamide. It functions in the pathway amino-acid biosynthesis; L-histidine biosynthesis; L-histidine from 5-phospho-alpha-D-ribose 1-diphosphate: step 3/9. Functionally, catalyzes the hydrolysis of the adenine ring of phosphoribosyl-AMP. In Archaeoglobus fulgidus (strain ATCC 49558 / DSM 4304 / JCM 9628 / NBRC 100126 / VC-16), this protein is Phosphoribosyl-AMP cyclohydrolase.